A 184-amino-acid polypeptide reads, in one-letter code: Ribosome-recycling factor (184 aa).

It belongs to the RRF family.

It is found in the cytoplasm. Its function is as follows. Responsible for the release of ribosomes from messenger RNA at the termination of protein biosynthesis. May increase the efficiency of translation by recycling ribosomes from one round of translation to another. The chain is Ribosome-recycling factor from Clostridium botulinum (strain ATCC 19397 / Type A).